The chain runs to 92 residues: Putative protein pog (92 aa).

This chain is Putative protein pog, found in Acute bee paralysis virus (strain Rothamsted) (ABPV).